The chain runs to 897 residues: Translation initiation factor IF-2 (897 aa).

Positions 402-570 (NRAPIVTIMG…SILVQSEILE (169 aa)) constitute a tr-type G domain. The interval 411-418 (GHVDHGKT) is G1. 411-418 (GHVDHGKT) is a GTP binding site. The G2 stretch occupies residues 436–440 (GITQN). Residues 458–461 (DTPG) form a G3 region. Residues 458–462 (DTPGH) and 512–515 (NKID) contribute to the GTP site. The segment at 512–515 (NKID) is G4. The G5 stretch occupies residues 548–550 (SAV).

It belongs to the TRAFAC class translation factor GTPase superfamily. Classic translation factor GTPase family. IF-2 subfamily.

It is found in the cytoplasm. One of the essential components for the initiation of protein synthesis. Protects formylmethionyl-tRNA from spontaneous hydrolysis and promotes its binding to the 30S ribosomal subunits. Also involved in the hydrolysis of GTP during the formation of the 70S ribosomal complex. The polypeptide is Translation initiation factor IF-2 (Blochmanniella floridana).